Consider the following 169-residue polypeptide: Shikimate kinase (169 aa).

12-17 provides a ligand contact to ATP; that stretch reads GCGKST. Residue Ser-16 coordinates Mg(2+). Asp-34, Arg-57, and Gly-79 together coordinate substrate. Arg-116 serves as a coordination point for ATP. Arg-133 lines the substrate pocket.

This sequence belongs to the shikimate kinase family. As to quaternary structure, monomer. Requires Mg(2+) as cofactor.

It localises to the cytoplasm. It catalyses the reaction shikimate + ATP = 3-phosphoshikimate + ADP + H(+). Its pathway is metabolic intermediate biosynthesis; chorismate biosynthesis; chorismate from D-erythrose 4-phosphate and phosphoenolpyruvate: step 5/7. Catalyzes the specific phosphorylation of the 3-hydroxyl group of shikimic acid using ATP as a cosubstrate. The protein is Shikimate kinase of Clostridium beijerinckii (strain ATCC 51743 / NCIMB 8052) (Clostridium acetobutylicum).